We begin with the raw amino-acid sequence, 565 residues long: Urocanate hydratase (565 aa).

NAD(+) contacts are provided by residues 61 to 62, Gln-139, 185 to 187, Glu-205, Arg-210, 251 to 252, 272 to 276, 282 to 283, and Tyr-331; these read GG, GMG, NA, QTSAH, and YL. Cys-419 is an active-site residue. The interval 453–472 is disordered; that stretch reads LDSGSVASPNRETESMRDGS. Over residues 463 to 472 the composition is skewed to basic and acidic residues; it reads RETESMRDGS. Gly-501 is a binding site for NAD(+).

Belongs to the urocanase family. NAD(+) is required as a cofactor.

It is found in the cytoplasm. The enzyme catalyses 4-imidazolone-5-propanoate = trans-urocanate + H2O. It functions in the pathway amino-acid degradation; L-histidine degradation into L-glutamate; N-formimidoyl-L-glutamate from L-histidine: step 2/3. Catalyzes the conversion of urocanate to 4-imidazolone-5-propionate. The sequence is that of Urocanate hydratase from Pseudomonas savastanoi pv. phaseolicola (strain 1448A / Race 6) (Pseudomonas syringae pv. phaseolicola (strain 1448A / Race 6)).